A 570-amino-acid chain; its full sequence is Periplasmic trehalase (570 aa).

The signal sequence occupies residues 1–34; it reads MIPPEIRRSVLLQKAIKLALAGTLLTFASFSATA. Substrate-binding positions include arginine 159, 166–167, asparagine 203, 212–214, 284–286, and glycine 317; these read WD, RSQ, and RPE. Residues aspartate 319 and glutamate 503 each act as proton donor/acceptor in the active site. A substrate-binding site is contributed by glutamate 518. The segment at 544-570 is disordered; it reads KPCDSVPSTRPASLSATPTKTPSAATQ. Low complexity predominate over residues 554–570; that stretch reads PASLSATPTKTPSAATQ.

Belongs to the glycosyl hydrolase 37 family. As to quaternary structure, monomer.

The protein localises to the periplasm. It catalyses the reaction alpha,alpha-trehalose + H2O = alpha-D-glucose + beta-D-glucose. Provides the cells with the ability to utilize trehalose at high osmolarity by splitting it into glucose molecules that can subsequently be taken up by the phosphotransferase-mediated uptake system. The sequence is that of Periplasmic trehalase from Salmonella paratyphi B (strain ATCC BAA-1250 / SPB7).